The sequence spans 313 residues: R2-like ligand binding oxidase (313 aa).

Mn(2+)-binding residues include Glu68, Glu101, and His104. A cross-link (3-(O4'-tyrosyl)-valine (Val-Tyr)) is located at residues Val71 to Tyr162. Glu101 is a binding site for Fe cation. 3 residues coordinate Fe cation: Glu167, Glu202, and His205.

The protein belongs to the ribonucleoside diphosphate reductase small chain family. R2-like ligand binding oxidase subfamily. In terms of assembly, homodimer. It depends on Fe cation as a cofactor. The cofactor is Mn(2+).

Probable oxidase that might be involved in lipid metabolism. In Mycobacteroides abscessus (strain ATCC 19977 / DSM 44196 / CCUG 20993 / CIP 104536 / JCM 13569 / NCTC 13031 / TMC 1543 / L948) (Mycobacterium abscessus), this protein is R2-like ligand binding oxidase.